Consider the following 341-residue polypeptide: Anthranilate phosphoribosyltransferase (341 aa).

5-phospho-alpha-D-ribose 1-diphosphate-binding positions include glycine 80, 83 to 84 (GD), threonine 88, 90 to 93 (NIST), 108 to 116 (KHGNRAVSS), and serine 120. Residue glycine 80 participates in anthranilate binding. A Mg(2+)-binding site is contributed by serine 92. Residue asparagine 111 coordinates anthranilate. Residue arginine 166 coordinates anthranilate. Mg(2+) is bound by residues aspartate 225 and glutamate 226.

It belongs to the anthranilate phosphoribosyltransferase family. As to quaternary structure, homodimer. Mg(2+) serves as cofactor.

The enzyme catalyses N-(5-phospho-beta-D-ribosyl)anthranilate + diphosphate = 5-phospho-alpha-D-ribose 1-diphosphate + anthranilate. It functions in the pathway amino-acid biosynthesis; L-tryptophan biosynthesis; L-tryptophan from chorismate: step 2/5. Functionally, catalyzes the transfer of the phosphoribosyl group of 5-phosphorylribose-1-pyrophosphate (PRPP) to anthranilate to yield N-(5'-phosphoribosyl)-anthranilate (PRA). In Brevibacillus brevis (strain 47 / JCM 6285 / NBRC 100599), this protein is Anthranilate phosphoribosyltransferase.